A 316-amino-acid chain; its full sequence is Probable cell division protein WhiA (316 aa).

Residues 275–309 (TLKELGEMVESGKISKSGINHRLRKLDQIAEQLRN) constitute a DNA-binding region (H-T-H motif).

This sequence belongs to the WhiA family.

Its function is as follows. Involved in cell division and chromosome segregation. The chain is Probable cell division protein WhiA from Bacillus pumilus (strain SAFR-032).